Here is a 192-residue protein sequence, read N- to C-terminus: A-type ATP synthase subunit E (192 aa).

This sequence belongs to the V-ATPase E subunit family. In terms of assembly, has multiple subunits with at least A(3), B(3), C, D, E, F, H, I and proteolipid K(x).

It is found in the cell membrane. Component of the A-type ATP synthase that produces ATP from ADP in the presence of a proton gradient across the membrane. This Methanoculleus marisnigri (strain ATCC 35101 / DSM 1498 / JR1) protein is A-type ATP synthase subunit E.